Consider the following 574-residue polypeptide: Septation ring formation regulator EzrA (574 aa).

Residues methionine 1–leucine 7 are Extracellular-facing. A helical transmembrane segment spans residues leucine 8–isoleucine 26. Residues arginine 27–phenylalanine 574 lie on the Cytoplasmic side of the membrane. Coiled coils occupy residues valine 104–asparagine 141, leucine 275–tyrosine 343, and aspartate 473–serine 525.

The protein belongs to the EzrA family.

It localises to the cell membrane. In terms of biological role, negative regulator of FtsZ ring formation; modulates the frequency and position of FtsZ ring formation. Inhibits FtsZ ring formation at polar sites. Interacts either with FtsZ or with one of its binding partners to promote depolymerization. This Streptococcus agalactiae serotype III (strain NEM316) protein is Septation ring formation regulator EzrA.